The chain runs to 2211 residues: Nonribosomal peptide synthetase 13 (2211 aa).

The adenylation 1 stretch occupies residues 76–475 (TYAELDSLSD…IEHHLQLTLP (400 aa)). Residues 594–671 (PPSTPKEATI…EQSKRAGLIQ (78 aa)) form the Carrier 1 domain. Serine 631 bears the O-(pantetheine 4'-phosphoryl)serine mark. The tract at residues 710–975 (EDIYPCTALQ…IATVPTRIRV (266 aa)) is condensation 1. An adenylation 2 region spans residues 1169–1563 (TYRELWAHSS…LGAVEASVMR (395 aa)). A Carrier 2 domain is found at 1677-1756 (PMSDDNERRL…RSRHLITEQA (80 aa)). Serine 1714 is modified (O-(pantetheine 4'-phosphoryl)serine). Residues 1814 to 2069 (HFQFDLSGAV…CTNYIPYRLS (256 aa)) form a condensation 2 region.

The protein belongs to the NRP synthetase family.

It carries out the reaction L-proline + L-tryptophan + 2 ATP = brevianamide F + 2 AMP + 2 diphosphate + 2 H(+). It functions in the pathway mycotoxin biosynthesis. In terms of biological role, nonribosomal peptide synthetase; part of the gene cluster that mediates the biosynthesis of fumitremorgins, indole alkaloids that carry not only intriguing chemical structures, but also interesting biological and pharmacological activities. The biosynthesis of fumitremorgin-type alkaloids begins by condensation of the two amino acids L-tryptophan and L-proline to brevianamide F, catalyzed by the non-ribosomal peptide synthetase ftmA. Brevianamide F is then prenylated by the prenyltransferase ftmPT1/ftmB in the presence of dimethylallyl diphosphate, resulting in the formation of tryprostatin B. The three cytochrome P450 monooxygenases, ftmP450-1/ftmC, ftmP450-2/ftmE and ftmP450-3/FtmG, are responsible for the conversion of tryprostatin B to 6-hydroxytryprostatin B, tryprostatin A to fumitremorgin C and fumitremorgin C to 12,13-dihydroxyfumitremorgin C, respectively. The putative methyltransferase ftmMT/ftmD is expected for the conversion of 6-hydroxytryprostatin B to tryprostatin A. FtmPT2/FtmH catalyzes the prenylation of 12,13-dihydroxyfumitre-morgin C in the presence of dimethylallyl diphosphate, resulting in the formation of fumitremorgin B. Fumitremorgin B is further converted to verruculogen by ftmOx1/ftmF via the insertion of an endoperoxide bond between the two prenyl moieties. In some fungal species, verruculogen is further converted to fumitremorgin A, but the enzymes involved in this step have not been identified yet. This Aspergillus fumigatus (strain ATCC MYA-4609 / CBS 101355 / FGSC A1100 / Af293) (Neosartorya fumigata) protein is Nonribosomal peptide synthetase 13.